Here is a 137-residue protein sequence, read N- to C-terminus: Holo-[acyl-carrier-protein] synthase (137 aa).

Positions 8 and 58 each coordinate Mg(2+).

This sequence belongs to the P-Pant transferase superfamily. AcpS family. The cofactor is Mg(2+).

It is found in the cytoplasm. It carries out the reaction apo-[ACP] + CoA = holo-[ACP] + adenosine 3',5'-bisphosphate + H(+). Transfers the 4'-phosphopantetheine moiety from coenzyme A to a Ser of acyl-carrier-protein. The chain is Holo-[acyl-carrier-protein] synthase from Lactobacillus delbrueckii subsp. bulgaricus (strain ATCC BAA-365 / Lb-18).